The primary structure comprises 200 residues: ATP-dependent Clp protease proteolytic subunit 3 (200 aa).

S101 acts as the Nucleophile in catalysis. The active site involves H126.

The protein belongs to the peptidase S14 family. Fourteen ClpP subunits assemble into 2 heptameric rings which stack back to back to give a disk-like structure with a central cavity, resembling the structure of eukaryotic proteasomes.

Its subcellular location is the cytoplasm. It carries out the reaction Hydrolysis of proteins to small peptides in the presence of ATP and magnesium. alpha-casein is the usual test substrate. In the absence of ATP, only oligopeptides shorter than five residues are hydrolyzed (such as succinyl-Leu-Tyr-|-NHMec, and Leu-Tyr-Leu-|-Tyr-Trp, in which cleavage of the -Tyr-|-Leu- and -Tyr-|-Trp bonds also occurs).. Functionally, cleaves peptides in various proteins in a process that requires ATP hydrolysis. Has a chymotrypsin-like activity. Plays a major role in the degradation of misfolded proteins. The chain is ATP-dependent Clp protease proteolytic subunit 3 from Synechococcus sp. (strain CC9902).